A 79-amino-acid chain; its full sequence is Conotoxin Cl9.4 (79 aa).

Positions 1–23 are cleaved as a signal peptide; it reads MNCYLILTVALLLTSAMTGTTTA. A propeptide spanning residues 24 to 37 is cleaved from the precursor; it reads GQLNKKGVTLREDD. Cystine bridges form between Cys-41/Cys-58, Cys-46/Cys-68, and Cys-48/Cys-73.

As to expression, expressed by the venom duct.

The protein localises to the secreted. The chain is Conotoxin Cl9.4 from Californiconus californicus (California cone).